Consider the following 411-residue polypeptide: Diels-Alderase ffsF (411 aa).

A signal peptide spans 1–17; the sequence is MTQIKLLLLSLAITAQS.

The protein belongs to the Diels-Alderase family.

It functions in the pathway mycotoxin biosynthesis. In terms of biological role, diels-Alderase; part of the gene cluster that mediates the biosynthesis of the cytotoxic leucine-containing cytochalasans, including aspochalasin C, aspochalasin E, TMC-169, flavichalasine F, aspergillin PZ, aspochalasin M and flavichalasine G. The first step in the pathway is catalyzed by the hybrid PKS-NRPS ffsA that utilizes 8 units of malonyl-CoA to iteratively assemble the octaketide chain before addition of L-leucine by the C-terminal NRPS modules. Because ffsA lacks a designated enoylreductase (ER) domain, the required activity is provided the enoyl reductase fssC. The methyltransferase (MT) domain of ffsA catalyzes the alpha-methylation at C10 and C14 using S-adenosyl-L-methionine as the methyl-donating cosubstrate. Reduction by the hydrolyase ffsE, followed by dehydration and intra-molecular Diels-Alder cyclization by the Diels-Alderase ffsF then yield the required isoindolone-fused macrocycle. A number of oxidative steps catalyzed by the tailoring cytochrome P450 monooxygenase ffsD, the FAD-linked oxidoreductase ffsJ and the short-chain dehydrogenase/reductase ffsI, are further required to afford the final products. The sequence is that of Diels-Alderase ffsF from Aspergillus flavipes.